The following is a 274-amino-acid chain: Type III pantothenate kinase (274 aa).

6-13 (DVRNTHTV) contacts ATP. Residue 109–112 (GADR) participates in substrate binding. The active-site Proton acceptor is the Asp-111. Asp-131 lines the K(+) pocket. An ATP-binding site is contributed by Ser-134. Residue Thr-186 participates in substrate binding.

The protein belongs to the type III pantothenate kinase family. As to quaternary structure, homodimer. Requires NH4(+) as cofactor. It depends on K(+) as a cofactor.

Its subcellular location is the cytoplasm. It carries out the reaction (R)-pantothenate + ATP = (R)-4'-phosphopantothenate + ADP + H(+). The protein operates within cofactor biosynthesis; coenzyme A biosynthesis; CoA from (R)-pantothenate: step 1/5. Catalyzes the phosphorylation of pantothenate (Pan), the first step in CoA biosynthesis. The polypeptide is Type III pantothenate kinase (Mycobacterium leprae (strain Br4923)).